The chain runs to 127 residues: Fluoride-specific ion channel FluC (127 aa).

The next 4 helical transmembrane spans lie at 4–24 (LDYL…YLVS), 39–59 (GTII…FAAI), 68–88 (AILF…TFTY), and 102–122 (VAYA…GMIL). Positions 78 and 81 each coordinate Na(+).

This sequence belongs to the fluoride channel Fluc/FEX (TC 1.A.43) family.

It localises to the cell inner membrane. The enzyme catalyses fluoride(in) = fluoride(out). Na(+) is not transported, but it plays an essential structural role and its presence is essential for fluoride channel function. In terms of biological role, fluoride-specific ion channel. Important for reducing fluoride concentration in the cell, thus reducing its toxicity. In Thermotoga maritima (strain ATCC 43589 / DSM 3109 / JCM 10099 / NBRC 100826 / MSB8), this protein is Fluoride-specific ion channel FluC.